Consider the following 414-residue polypeptide: Carbohydrate sulfotransferase 12 (414 aa).

Residues 1–5 (MTKAR) lie on the Cytoplasmic side of the membrane. Residues 6–26 (LFRLWLVLGSVFMILLIIVYW) form a helical; Signal-anchor for type II membrane protein membrane-spanning segment. The Lumenal portion of the chain corresponds to 27–414 (DSAGAAHFYL…YPKPENLLRD (388 aa)). Positions 80-125 (QSDLPRKETEQPPAPGSMEESVRGYDWSPRDARRSPDQGRQQAERR) are disordered. The span at 99 to 125 (ESVRGYDWSPRDARRSPDQGRQQAERR) shows a compositional bias: basic and acidic residues. Asparagine 134 carries N-linked (GlcNAc...) asparagine glycosylation. Position 171-177 (171-177 (PKVACTN)) interacts with 3'-phosphoadenylyl sulfate. The N-linked (GlcNAc...) asparagine glycan is linked to asparagine 209. A 3'-phosphoadenylyl sulfate-binding site is contributed by 245 to 253 (RDPFVRLIS). 2 N-linked (GlcNAc...) asparagine glycosylation sites follow: asparagine 280 and asparagine 370.

This sequence belongs to the sulfotransferase 2 family. As to expression, widely expressed. Expressed a high level in spinal chord, heart, spleen, thyroid, pituitary gland, adrenal gland, peripheral blood leukocytes, thymus, lung, small intestine, fetal kidney, fetal spleen and fetal lung.

It localises to the golgi apparatus membrane. It catalyses the reaction chondroitin beta-D-glucuronate + n 3'-phosphoadenylyl sulfate = chondroitin 4'-sulfate + n adenosine 3',5'-bisphosphate + n H(+). Functionally, catalyzes the transfer of sulfate to position 4 of the N-acetylgalactosamine (GalNAc) residue of chondroitin and desulfated dermatan sulfate. Chondroitin sulfate constitutes the predominant proteoglycan present in cartilage and is distributed on the surfaces of many cells and extracellular matrices. Activity toward partially desulfated dermatan sulfate is however lower. Does not form 4, 6-di-O-sulfated GalNAc when chondroitin sulfate C is used as an acceptor. The polypeptide is Carbohydrate sulfotransferase 12 (CHST12) (Homo sapiens (Human)).